Reading from the N-terminus, the 164-residue chain is Phosphopantetheine adenylyltransferase (164 aa).

Position 9 (S9) interacts with substrate. ATP contacts are provided by residues 9 to 10 and H17; that span reads SF. Positions 41, 73, and 87 each coordinate substrate. Residues 88–90, E98, and 123–129 each bind ATP; these read GLR and YSYLSSS.

The protein belongs to the bacterial CoaD family. In terms of assembly, homohexamer. Requires Mg(2+) as cofactor.

It is found in the cytoplasm. It carries out the reaction (R)-4'-phosphopantetheine + ATP + H(+) = 3'-dephospho-CoA + diphosphate. The protein operates within cofactor biosynthesis; coenzyme A biosynthesis; CoA from (R)-pantothenate: step 4/5. Functionally, reversibly transfers an adenylyl group from ATP to 4'-phosphopantetheine, yielding dephospho-CoA (dPCoA) and pyrophosphate. The protein is Phosphopantetheine adenylyltransferase of Clostridium botulinum (strain Okra / Type B1).